Reading from the N-terminus, the 805-residue chain is 1,4-alpha-glucan-branching enzyme 2-2, chloroplastic/amyloplastic (805 aa).

Residues 1-32 (MVVIHGVSLTPRFTLPSRPLNTGFNAGNSTLS) constitute a chloroplast transit peptide. Asp451 functions as the Nucleophile in the catalytic mechanism. Glu506 functions as the Proton donor in the catalytic mechanism.

It belongs to the glycosyl hydrolase 13 family. GlgB subfamily. Monomer. Expressed in seedlings, roots, stems, leaves, inflorescences, seeds and flowers.

It localises to the plastid. Its subcellular location is the chloroplast stroma. The protein localises to the amyloplast. It carries out the reaction Transfers a segment of a (1-&gt;4)-alpha-D-glucan chain to a primary hydroxy group in a similar glucan chain.. Its pathway is glycan biosynthesis; starch biosynthesis. Catalyzes the formation of the alpha-1,6-glucosidic linkages in starch by scission of a 1,4-alpha-linked oligosaccharide from growing alpha-1,4-glucan chains and the subsequent attachment of the oligosaccharide to the alpha-1,6 position. The protein is 1,4-alpha-glucan-branching enzyme 2-2, chloroplastic/amyloplastic (SBE2.2) of Arabidopsis thaliana (Mouse-ear cress).